Consider the following 70-residue polypeptide: Flexible pilin (70 aa).

Positions 1–24 (MPNFFRNGCIALVGSVAAMGAAHA) are cleaved as a signal peptide.

In terms of assembly, homomer.

The protein localises to the fimbrium. Functionally, fimbriae (also called pili) are polar filaments radiating from the surface of the bacterium to a length of 0.5-1.5 micrometers and numbering 100-300 per cell. They enable bacteria to colonize the epithelium of specific host organs. Flexible pili possess hemagglutinating function. The chain is Flexible pilin (aerA) from Aeromonas hydrophila.